The chain runs to 334 residues: Forkhead box protein N2 (334 aa).

Disordered stretches follow at residues Met-1–Thr-52 and Ser-83–Lys-108. A DNA-binding region (fork-head) is located at residues Lys-108 to Ser-204.

Its subcellular location is the nucleus. The polypeptide is Forkhead box protein N2 (Xenopus tropicalis (Western clawed frog)).